The primary structure comprises 682 residues: Potassium-transporting ATPase ATP-binding subunit (682 aa).

The next 4 membrane-spanning stretches (helical) occupy residues 34 to 54 (PVMFIVWIGSLLTTCISIAMA), 62 to 82 (ALFSAAISGWLWVTVLFANFA), 219 to 239 (IALTILLIALTIVFLLATATL), and 254 to 274 (VLVALLVCLIPTTIGGLLSAI). D307 serves as the catalytic 4-aspartylphosphate intermediate. Residues D344, E348, 377 to 384 (FTAQSRMS), and K395 contribute to the ATP site. Residues D518 and D522 each coordinate Mg(2+). A run of 3 helical transmembrane segments spans residues 588-608 (FAIIPAAFAATYPQLNALNIM), 616-636 (AILSAVIFNALIIVFLIPLAL), and 656-676 (IYGLGGLLVPFIGIKVIDLLL).

It belongs to the cation transport ATPase (P-type) (TC 3.A.3) family. Type IA subfamily. The system is composed of three essential subunits: KdpA, KdpB and KdpC.

The protein resides in the cell inner membrane. It carries out the reaction K(+)(out) + ATP + H2O = K(+)(in) + ADP + phosphate + H(+). In terms of biological role, part of the high-affinity ATP-driven potassium transport (or Kdp) system, which catalyzes the hydrolysis of ATP coupled with the electrogenic transport of potassium into the cytoplasm. This subunit is responsible for energy coupling to the transport system and for the release of the potassium ions to the cytoplasm. This is Potassium-transporting ATPase ATP-binding subunit from Shigella sonnei (strain Ss046).